The following is a 488-amino-acid chain: 3-octaprenyl-4-hydroxybenzoate carboxy-lyase (488 aa).

Residue asparagine 172 participates in Mn(2+) binding. Prenylated FMN is bound by residues 175–177 (IYR), 189–191 (RWL), and 194–195 (RG). Residue glutamate 238 coordinates Mn(2+). Aspartate 287 serves as the catalytic Proton donor.

This sequence belongs to the UbiD family. In terms of assembly, homohexamer. The cofactor is prenylated FMN. Mn(2+) serves as cofactor.

It is found in the cell membrane. The catalysed reaction is a 4-hydroxy-3-(all-trans-polyprenyl)benzoate + H(+) = a 2-(all-trans-polyprenyl)phenol + CO2. Its pathway is cofactor biosynthesis; ubiquinone biosynthesis. In terms of biological role, catalyzes the decarboxylation of 3-octaprenyl-4-hydroxy benzoate to 2-octaprenylphenol, an intermediate step in ubiquinone biosynthesis. This is 3-octaprenyl-4-hydroxybenzoate carboxy-lyase from Pseudomonas syringae pv. syringae (strain B728a).